The primary structure comprises 37 residues: Esculentin-2JDa (37 aa).

The cysteines at positions 31 and 37 are disulfide-linked.

As to expression, expressed by the skin glands.

The protein localises to the secreted. In terms of biological role, has antibacterial activity against E.coli and S.aureus strains. This Odorrana jingdongensis (Jingdong frog) protein is Esculentin-2JDa.